The primary structure comprises 112 residues: Dolichyl-diphosphooligosaccharide--protein glycosyltransferase subunit DAD1 (112 aa).

At 1–27 (MVELSSVISKFYNDYVQNTPKKLKLVD) the chain is on the cytoplasmic side. The helical transmembrane segment at 28–48 (IYLGYILLTGIIQFVYCCLVG) threads the bilayer. The Lumenal portion of the chain corresponds to 49–51 (TFP). The helical transmembrane segment at 52-72 (FNSFLSGFISTVSCFVLAVCL) threads the bilayer. The Cytoplasmic segment spans residues 73-91 (RLQANPQNKSVFAGISPER). A helical membrane pass occupies residues 92–112 (GFADFIFAHVILHLVVMNFIG).

The protein belongs to the DAD/OST2 family. Component of the oligosaccharyltransferase (OST) complex.

It is found in the endoplasmic reticulum membrane. Its pathway is protein modification; protein glycosylation. Its function is as follows. Subunit of the oligosaccharyl transferase (OST) complex that catalyzes the initial transfer of a defined glycan (Glc(3)Man(9)GlcNAc(2) in eukaryotes) from the lipid carrier dolichol-pyrophosphate to an asparagine residue within an Asn-X-Ser/Thr consensus motif in nascent polypeptide chains, the first step in protein N-glycosylation. N-glycosylation occurs cotranslationally and the complex associates with the Sec61 complex at the channel-forming translocon complex that mediates protein translocation across the endoplasmic reticulum (ER). All subunits are required for a maximal enzyme activity. Probably as part of the N-glycosylation pathway, plays a role in the regulation of tissue growth and apoptosis. The sequence is that of Dolichyl-diphosphooligosaccharide--protein glycosyltransferase subunit DAD1 from Drosophila melanogaster (Fruit fly).